A 147-amino-acid chain; its full sequence is Cyanate hydratase (147 aa).

Catalysis depends on residues arginine 88, glutamate 91, and serine 114.

The protein belongs to the cyanase family.

It catalyses the reaction cyanate + hydrogencarbonate + 3 H(+) = NH4(+) + 2 CO2. Its function is as follows. Catalyzes the reaction of cyanate with bicarbonate to produce ammonia and carbon dioxide. This Dechloromonas aromatica (strain RCB) protein is Cyanate hydratase.